Consider the following 346-residue polypeptide: Dihydroorotate dehydrogenase (quinone) (346 aa).

Residues 62–66 (AGMDK) and threonine 86 contribute to the FMN site. Lysine 66 is a substrate binding site. 111–115 (NRMGF) contacts substrate. The FMN site is built by asparagine 142 and asparagine 175. Asparagine 175 is a substrate binding site. Serine 178 functions as the Nucleophile in the catalytic mechanism. Asparagine 180 is a binding site for substrate. Positions 211 and 239 each coordinate FMN. A substrate-binding site is contributed by 240–241 (NT). Residues glycine 261, glycine 289, and 310–311 (YT) contribute to the FMN site.

The protein belongs to the dihydroorotate dehydrogenase family. Type 2 subfamily. In terms of assembly, monomer. FMN is required as a cofactor.

It is found in the cell membrane. It catalyses the reaction (S)-dihydroorotate + a quinone = orotate + a quinol. It functions in the pathway pyrimidine metabolism; UMP biosynthesis via de novo pathway; orotate from (S)-dihydroorotate (quinone route): step 1/1. Its function is as follows. Catalyzes the conversion of dihydroorotate to orotate with quinone as electron acceptor. This Thermus thermophilus (strain ATCC BAA-163 / DSM 7039 / HB27) protein is Dihydroorotate dehydrogenase (quinone).